The sequence spans 75 residues: Tautomerase PptA (75 aa).

The active-site Proton acceptor; via imino nitrogen is proline 2.

Belongs to the 4-oxalocrotonate tautomerase family. PptA subfamily. As to quaternary structure, homodimer.

It is found in the cytoplasm. The protein is Tautomerase PptA of Klebsiella pneumoniae subsp. pneumoniae (strain ATCC 700721 / MGH 78578).